The chain runs to 77 residues: Acyl carrier protein (77 aa).

Residues 1 to 76 form the Carrier domain; sequence MSIEERVKKI…SAIDYVTKAN (76 aa). Position 36 is an O-(pantetheine 4'-phosphoryl)serine (serine 36).

It belongs to the acyl carrier protein (ACP) family. Post-translationally, 4'-phosphopantetheine is transferred from CoA to a specific serine of apo-ACP by AcpS. This modification is essential for activity because fatty acids are bound in thioester linkage to the sulfhydryl of the prosthetic group.

Its subcellular location is the cytoplasm. It functions in the pathway lipid metabolism; fatty acid biosynthesis. In terms of biological role, carrier of the growing fatty acid chain in fatty acid biosynthesis. The sequence is that of Acyl carrier protein from Actinobacillus pleuropneumoniae serotype 5b (strain L20).